We begin with the raw amino-acid sequence, 142 residues long: Ribosome maturation factor RimP (142 aa).

It belongs to the RimP family.

It localises to the cytoplasm. In terms of biological role, required for maturation of 30S ribosomal subunits. The chain is Ribosome maturation factor RimP from Nitrosospira multiformis (strain ATCC 25196 / NCIMB 11849 / C 71).